The primary structure comprises 242 residues: Small ribosomal subunit protein uS2 (242 aa).

Belongs to the universal ribosomal protein uS2 family.

The chain is Small ribosomal subunit protein uS2 from Shewanella loihica (strain ATCC BAA-1088 / PV-4).